The chain runs to 84 residues: Small ribosomal subunit protein uS17 (84 aa).

The protein belongs to the universal ribosomal protein uS17 family. In terms of assembly, part of the 30S ribosomal subunit.

Its function is as follows. One of the primary rRNA binding proteins, it binds specifically to the 5'-end of 16S ribosomal RNA. The polypeptide is Small ribosomal subunit protein uS17 (Nitrosomonas europaea (strain ATCC 19718 / CIP 103999 / KCTC 2705 / NBRC 14298)).